A 265-amino-acid polypeptide reads, in one-letter code: Glutamate racemase (265 aa).

Substrate contacts are provided by residues 9–10 and 41–42; these read DS and YG. Residue Cys73 is the Proton donor/acceptor of the active site. Residue 74–75 participates in substrate binding; the sequence is NT. The Proton donor/acceptor role is filled by Cys180. Position 181–182 (181–182) interacts with substrate; the sequence is TH.

Belongs to the aspartate/glutamate racemases family.

The catalysed reaction is L-glutamate = D-glutamate. It participates in cell wall biogenesis; peptidoglycan biosynthesis. Its function is as follows. Provides the (R)-glutamate required for cell wall biosynthesis. The chain is Glutamate racemase from Aliivibrio salmonicida (strain LFI1238) (Vibrio salmonicida (strain LFI1238)).